We begin with the raw amino-acid sequence, 275 residues long: Axoneme-associated protein mst101(3) (275 aa).

12 consecutive repeat copies span residues 64–79 (KKKC…EAAE), 80–95 (KKKC…EAAE), 96–111 (KKKC…EAAQ), 112–127 (KKKC…EAAE), 128–143 (KKKC…EAAE), 144–159 (RKKC…CEEA), 160–175 (AKKK…LQQK), 181–196 (KKEK…EEAA), 197–212 (KKKA…AEEV), 215–230 (KKKA…CAEA), 231–246 (KKKA…CEEA), and 249–264 (KKMC…CAEA). The segment at 64-264 (KKKCAEAAKK…AALQKKCAEA (201 aa)) is 12 X 16 AA tandem repeats of [KRA]-K-[KEM]-[CKA]-[AEKD]-[EA]-[ALE]-[AMK]-[FKAML]-[KQA]-[EQKA]-[KQCEM]-[ECLA]-[AEQ]-[AEQ]-[EQAKV].

As to expression, testis.

The protein localises to the cytoplasm. Functionally, possible structural role in the sperm tail. The sequence is that of Axoneme-associated protein mst101(3) (mst101(3)) from Drosophila hydei (Fruit fly).